A 300-amino-acid polypeptide reads, in one-letter code: Ribosomal protein bS6--L-glutamate ligase (300 aa).

One can recognise an ATP-grasp domain in the interval 104-287 (MQLLARQGID…IAGKMIRWIE (184 aa)). ATP-binding positions include Lys-141, 178–179 (EY), Asp-187, and 211–213 (RSN). Positions 248, 260, and 262 each coordinate Mg(2+). The Mn(2+) site is built by Asp-248, Glu-260, and Asn-262.

It belongs to the RimK family. Mg(2+) is required as a cofactor. Requires Mn(2+) as cofactor.

In terms of biological role, an L-glutamate ligase that catalyzes the ATP-dependent post-translational addition of glutamate residues to the C-terminus of ribosomal protein bS6 (RpsF). Is also able to catalyze the synthesis of poly-alpha-glutamate in vitro, via ATP hydrolysis from unprotected glutamate as substrate. The number of glutamate residues added to either RpsF or to poly-alpha-glutamate changes with pH. The protein is Ribosomal protein bS6--L-glutamate ligase of Escherichia fergusonii (strain ATCC 35469 / DSM 13698 / CCUG 18766 / IAM 14443 / JCM 21226 / LMG 7866 / NBRC 102419 / NCTC 12128 / CDC 0568-73).